Consider the following 501-residue polypeptide: Ribose import ATP-binding protein RbsA (501 aa).

2 ABC transporter domains span residues 5–241 (LQLK…VGRK) and 252–495 (APGD…VGKL). 37–44 (GENGAGKS) provides a ligand contact to ATP.

Belongs to the ABC transporter superfamily. Ribose importer (TC 3.A.1.2.1) family. In terms of assembly, the complex is composed of an ATP-binding protein (RbsA), two transmembrane proteins (RbsC) and a solute-binding protein (RbsB).

Its subcellular location is the cell inner membrane. It catalyses the reaction D-ribose(out) + ATP + H2O = D-ribose(in) + ADP + phosphate + H(+). Part of the ABC transporter complex RbsABC involved in ribose import. Responsible for energy coupling to the transport system. In Escherichia coli (strain K12), this protein is Ribose import ATP-binding protein RbsA.